The chain runs to 329 residues: Ubiquitin carboxyl-terminal hydrolase isozyme L5 (329 aa).

The UCH catalytic domain occupies 7–225 (EWCLMESDPG…IRFNLMAIVS (219 aa)). Lysine 47 carries the post-translational modification N6-succinyllysine. Residue cysteine 88 is the Nucleophile of the active site. Lysine 158 carries the N6-acetyllysine modification. Histidine 164 serves as the catalytic Proton donor. Lysine 289 carries the N6-succinyllysine modification. In terms of domain architecture, ULD spans 291-319 (NYLPFIMELLKTLAEHQQLIPLVEKAKEK). The segment at 313-329 (VEKAKEKQNAKKAQETK) is interaction with ADRM1.

This sequence belongs to the peptidase C12 family. Component of the 19S (PA700) regulatory complex of the 26S proteasome. Interacts with ADRM1 and NFRKB. Component of the INO80 complex; specifically part of a complex module associated with N-terminus of INO80.

It is found in the cytoplasm. The protein resides in the nucleus. The catalysed reaction is Thiol-dependent hydrolysis of ester, thioester, amide, peptide and isopeptide bonds formed by the C-terminal Gly of ubiquitin (a 76-residue protein attached to proteins as an intracellular targeting signal).. With respect to regulation, activated by ADRM1. Inhibited by interaction with NFRKB. In terms of biological role, protease that specifically cleaves 'Lys-48'-linked polyubiquitin chains. Deubiquitinating enzyme associated with the 19S regulatory subunit of the 26S proteasome. Putative regulatory component of the INO80 complex; however is inactive in the INO80 complex and is activated by a transient interaction of the INO80 complex with the proteasome via ADRM1. This chain is Ubiquitin carboxyl-terminal hydrolase isozyme L5 (UCHL5), found in Sus scrofa (Pig).